A 367-amino-acid polypeptide reads, in one-letter code: Outer membrane porin C (367 aa).

The signal sequence occupies residues 1–21 (MKVKVLSLLVPALLVAGAANA). The Periplasmic segment spans residues 22–33 (AEVYNKDGNKLD). Residues 34–42 (LYGKVDGLH) form a beta stranded membrane-spanning segment. Residues 43–53 (YFSDNKDVDGD) lie on the Extracellular side of the membrane. Residues 54 to 63 (QTYMRLGFKG) form a beta stranded membrane-spanning segment. The Periplasmic segment spans residues 64-73 (ETQVTDQLTG). Residues 74–84 (YGQWEYQIQGN) form a beta stranded membrane-spanning segment. The Extracellular segment spans residues 85–91 (SAENENN). Residues 92-101 (SWTRVAFAGL) form a beta stranded membrane-spanning segment. Topologically, residues 102-106 (KFQDV) are periplasmic. Residues 107–115 (GSFDYGRNY) form a beta stranded membrane-spanning segment. The segment at 116 to 133 (GVVYDVTSWTDVLPEFGG) is loop L3; may constrict the pore. The Extracellular portion of the chain corresponds to 116 to 141 (GVVYDVTSWTDVLPEFGGDTYGSDNF). A beta stranded transmembrane segment spans residues 142 to 154 (MQQRGNGFATYRN). Over 155–163 (TDFFGLVDG) the chain is Periplasmic. The chain crosses the membrane as a beta stranded span at residues 164–171 (LNFAVQYQ). The Extracellular portion of the chain corresponds to 172–200 (GKNGNPSGEGFTSGVTNNGRDALRQNGDG). A beta stranded transmembrane segment spans residues 201–207 (VGGSITY). Residues 208-211 (DYEG) are Periplasmic-facing. Residues 212–219 (FGIGGAIS) traverse the membrane as a beta stranded segment. Residues 220 to 241 (SSKRTDAQNTAAYIGNGDRAET) lie on the Extracellular side of the membrane. Residues 242–248 (YTGGLKY) traverse the membrane as a beta stranded segment. Topologically, residues 249-252 (DANN) are periplasmic. A beta stranded membrane pass occupies residues 253 to 260 (IYLAAQYT). The Extracellular segment spans residues 261–269 (QTYNATRVG). Residues 270 to 286 (SLGWANKAQNFEAVAQY) traverse the membrane as a beta stranded segment. The Periplasmic segment spans residues 287–291 (QFDFG). Residues 292–299 (LRPSLAYL) traverse the membrane as a beta stranded segment. At 300 to 318 (QSKGKNLGRGYDDEDILKY) the chain is on the extracellular side. A beta stranded membrane pass occupies residues 319-326 (VDVGATYY). The Periplasmic segment spans residues 327-330 (FNKN). Residues 331–338 (MSTYVDYK) traverse the membrane as a beta stranded segment. Residues 339-358 (INLLDDNQFTRDAGINTDNI) lie on the Extracellular side of the membrane. Mg(2+) is bound by residues Asn340, Leu342, and Thr355. Residues 359–366 (VALGLVYQ) traverse the membrane as a beta stranded segment. Residue Phe367 is a topological domain, periplasmic.

Belongs to the Gram-negative porin family. Homotrimer. Forms mixed heterotrimers with OmpF and with PhoE; other mixed heterotrimers are also probable.

It localises to the cell outer membrane. Forms pores that allow passive diffusion of small molecules across the outer membrane. Functionally, (Microbial infection) Supports colicin E5 entry in the absence of its major receptor OmpF. Its function is as follows. (Microbial infection) A mixed OmpC-OmpF heterotrimer is the outer membrane receptor for toxin CdiA-EC536; polymorphisms in extracellular loops 4 and 5 of OmpC confer susceptibility to CdiA-EC536-mediated toxicity. In Escherichia coli (strain K12), this protein is Outer membrane porin C (ompC).